The primary structure comprises 371 residues: Probable tRNA sulfurtransferase (371 aa).

In terms of domain architecture, THUMP spans 54 to 156 (NANIEALSEV…NEMTYFYHKV (103 aa)). ATP-binding positions include 174 to 175 (LF), 199 to 200 (NF), lysine 254, glycine 276, and glutamine 285.

Belongs to the ThiI family.

Its subcellular location is the cytoplasm. The catalysed reaction is [ThiI sulfur-carrier protein]-S-sulfanyl-L-cysteine + a uridine in tRNA + 2 reduced [2Fe-2S]-[ferredoxin] + ATP + H(+) = [ThiI sulfur-carrier protein]-L-cysteine + a 4-thiouridine in tRNA + 2 oxidized [2Fe-2S]-[ferredoxin] + AMP + diphosphate. The enzyme catalyses [ThiS sulfur-carrier protein]-C-terminal Gly-Gly-AMP + S-sulfanyl-L-cysteinyl-[cysteine desulfurase] + AH2 = [ThiS sulfur-carrier protein]-C-terminal-Gly-aminoethanethioate + L-cysteinyl-[cysteine desulfurase] + A + AMP + 2 H(+). It participates in cofactor biosynthesis; thiamine diphosphate biosynthesis. Functionally, catalyzes the ATP-dependent transfer of a sulfur to tRNA to produce 4-thiouridine in position 8 of tRNAs, which functions as a near-UV photosensor. Also catalyzes the transfer of sulfur to the sulfur carrier protein ThiS, forming ThiS-thiocarboxylate. This is a step in the synthesis of thiazole, in the thiamine biosynthesis pathway. The sulfur is donated as persulfide by IscS. The polypeptide is Probable tRNA sulfurtransferase (Saccharolobus solfataricus (strain ATCC 35092 / DSM 1617 / JCM 11322 / P2) (Sulfolobus solfataricus)).